A 734-amino-acid polypeptide reads, in one-letter code: Photosystem I P700 chlorophyll a apoprotein A2 (734 aa).

8 helical membrane-spanning segments follow: residues 46-69 (IFAS…FHVA), 135-158 (LYTG…LHLQ), 175-199 (LNHH…HVAI), 273-291 (MAHH…GHMY), 330-353 (LHFQ…QHMY), 369-395 (SALY…IFFI), 417-439 (ALIS…LYVH), and 517-535 (FLVH…LILV). [4Fe-4S] cluster-binding residues include cysteine 559 and cysteine 568. Helical transmembrane passes span 575-596 (AFYL…YWHW) and 643-665 (LSVW…MFLI). Chlorophyll a-binding residues include histidine 654, methionine 662, and tyrosine 670. Residue tryptophan 671 coordinates phylloquinone. Residues 707-727 (LVGLAHFSVGYVFTYAAFVIA) form a helical membrane-spanning segment.

This sequence belongs to the PsaA/PsaB family. As to quaternary structure, the PsaA/B heterodimer binds the P700 chlorophyll special pair and subsequent electron acceptors. PSI consists of a core antenna complex that captures photons, and an electron transfer chain that converts photonic excitation into a charge separation. The eukaryotic PSI reaction center is composed of at least 11 subunits. P700 is a chlorophyll a/chlorophyll a' dimer, A0 is one or more chlorophyll a, A1 is one or both phylloquinones and FX is a shared 4Fe-4S iron-sulfur center. is required as a cofactor.

Its subcellular location is the plastid. The protein resides in the chloroplast thylakoid membrane. The enzyme catalyses reduced [plastocyanin] + hnu + oxidized [2Fe-2S]-[ferredoxin] = oxidized [plastocyanin] + reduced [2Fe-2S]-[ferredoxin]. In terms of biological role, psaA and PsaB bind P700, the primary electron donor of photosystem I (PSI), as well as the electron acceptors A0, A1 and FX. PSI is a plastocyanin/cytochrome c6-ferredoxin oxidoreductase, converting photonic excitation into a charge separation, which transfers an electron from the donor P700 chlorophyll pair to the spectroscopically characterized acceptors A0, A1, FX, FA and FB in turn. Oxidized P700 is reduced on the lumenal side of the thylakoid membrane by plastocyanin or cytochrome c6. The chain is Photosystem I P700 chlorophyll a apoprotein A2 from Nephroselmis olivacea (Green alga).